A 177-amino-acid chain; its full sequence is Secretion monitor (177 aa).

An N-terminal signal peptide occupies residues 1-37 (MIGILNRWRQFGRRYFWPHLLLGMVAASLGVPSNLSG).

The protein belongs to the SecM family.

It localises to the cytoplasm. The protein localises to the cytosol. The protein resides in the periplasm. Its function is as follows. Regulates secA expression by translational coupling of the secM secA operon. Translational pausing at a specific Pro residue 5 residues before the end of the protein may allow disruption of a mRNA repressor helix that normally suppresses secA translation initiation. In Yersinia pseudotuberculosis serotype O:1b (strain IP 31758), this protein is Secretion monitor.